Reading from the N-terminus, the 204-residue chain is CASP-like protein 3A1 (204 aa).

At 1–39 (MGSIGNGRNGSEVGIQIPAMGNKEVLERPAIPRWPRLGV) the chain is on the cytoplasmic side. The chain crosses the membrane as a helical span at residues 40-60 (VMVATRAVALVMAVLSMALMI). Over 61–88 (SAKQRGSLKIFGIEIPLYANWSFSDSLE) the chain is Extracellular. A glycan (N-linked (GlcNAc...) asparagine) is linked at Asn80. A helical transmembrane segment spans residues 89–109 (YLVGMSAVSAAYCLAQLLLTA). Topologically, residues 110–124 (HKAVKNAPVVQSRNY) are cytoplasmic. A helical transmembrane segment spans residues 125-145 (AWLLFTGDQIFAYAMMSAGSA). Residues 146–179 (AAAVANLNRTGIRHTALPNFCKPLPRFCDLSAAS) lie on the Extracellular side of the membrane. Residue Asn153 is glycosylated (N-linked (GlcNAc...) asparagine). A helical membrane pass occupies residues 180 to 200 (IACAFLSCIFLAASAVIDVIW). Topologically, residues 201–204 (LSNM) are cytoplasmic.

This sequence belongs to the Casparian strip membrane proteins (CASP) family. In terms of assembly, homodimer and heterodimers.

The protein resides in the cell membrane. The polypeptide is CASP-like protein 3A1 (Oryza sativa subsp. indica (Rice)).